We begin with the raw amino-acid sequence, 1080 residues long: Isoleucine--tRNA ligase (1080 aa).

Positions 48 to 58 match the 'HIGH' region motif; the sequence is PYASGSIHLGT. Positions 628–632 match the 'KMSKS' region motif; that stretch reads KMSKS. Residue Lys631 coordinates ATP.

This sequence belongs to the class-I aminoacyl-tRNA synthetase family. IleS type 2 subfamily. As to quaternary structure, monomer. Zn(2+) serves as cofactor.

It is found in the cytoplasm. The enzyme catalyses tRNA(Ile) + L-isoleucine + ATP = L-isoleucyl-tRNA(Ile) + AMP + diphosphate. In terms of biological role, catalyzes the attachment of isoleucine to tRNA(Ile). As IleRS can inadvertently accommodate and process structurally similar amino acids such as valine, to avoid such errors it has two additional distinct tRNA(Ile)-dependent editing activities. One activity is designated as 'pretransfer' editing and involves the hydrolysis of activated Val-AMP. The other activity is designated 'posttransfer' editing and involves deacylation of mischarged Val-tRNA(Ile). The sequence is that of Isoleucine--tRNA ligase from Methanopyrus kandleri (strain AV19 / DSM 6324 / JCM 9639 / NBRC 100938).